A 422-amino-acid chain; its full sequence is UDP-N-acetylglucosamine 1-carboxyvinyltransferase 2 (422 aa).

Phosphoenolpyruvate is bound at residue 22 to 23; it reads KN. Arg93 serves as a coordination point for UDP-N-acetyl-alpha-D-glucosamine. Cys117 (proton donor) is an active-site residue. 2-(S-cysteinyl)pyruvic acid O-phosphothioketal is present on Cys117. Residues 122-126, Asp308, and Ile330 contribute to the UDP-N-acetyl-alpha-D-glucosamine site; that span reads RPVDL.

This sequence belongs to the EPSP synthase family. MurA subfamily.

The protein resides in the cytoplasm. The enzyme catalyses phosphoenolpyruvate + UDP-N-acetyl-alpha-D-glucosamine = UDP-N-acetyl-3-O-(1-carboxyvinyl)-alpha-D-glucosamine + phosphate. The protein operates within cell wall biogenesis; peptidoglycan biosynthesis. In terms of biological role, cell wall formation. Adds enolpyruvyl to UDP-N-acetylglucosamine. The chain is UDP-N-acetylglucosamine 1-carboxyvinyltransferase 2 from Legionella pneumophila (strain Lens).